The sequence spans 150 residues: Ribonuclease K6 (150 aa).

The first 23 residues, 1 to 23, serve as a signal peptide directing secretion; the sequence is MVLCFPLLLLLLVLWGPVCLLHA. Catalysis depends on histidine 38, which acts as the Proton acceptor. 4 disulfides stabilise this stretch: cysteine 46-cysteine 104, cysteine 60-cysteine 114, cysteine 78-cysteine 129, and cysteine 85-cysteine 92. Asparagine 55 carries N-linked (GlcNAc...) asparagine glycosylation. Residues 61-65 and lysine 86 contribute to the substrate site; that span reads KHQNT. Asparagine 100 carries an N-linked (GlcNAc...) asparagine glycan. Arginine 105 provides a ligand contact to substrate. The Proton donor role is filled by histidine 145.

The protein belongs to the pancreatic ribonuclease family. In terms of assembly, interacts (via N-terminus) with bacterial lipopolysaccharide (LPS).

It is found in the secreted. The protein resides in the lysosome. It localises to the cytoplasmic granule. Ribonuclease which shows a preference for the pyrimidines uridine and cytosine. Has potent antibacterial activity against a range of Gram-positive and Gram-negative bacteria, including P.aeruginosa, A.baumanii, M.luteus, S.aureus, E.faecalis, E.faecium, S.saprophyticus and E.coli. Causes loss of bacterial membrane integrity, and also promotes agglutination of Gram-negative bacteria. Probably contributes to urinary tract sterility. Bactericidal activity is independent of RNase activity. The protein is Ribonuclease K6 (RNASE6) of Macaca mulatta (Rhesus macaque).